We begin with the raw amino-acid sequence, 921 residues long: Probable serine/threonine-protein kinase DDB_G0275165 (921 aa).

The region spanning 23–277 is the Protein kinase domain; it reads FDPLSIIGSG…SNILGLLEYI (255 aa). ATP-binding positions include 29–37 and lysine 50; that span reads IGSGGFGKV. Catalysis depends on aspartate 147, which acts as the Proton acceptor. Disordered stretches follow at residues 289-453, 465-492, 530-571, 583-653, 671-698, 737-813, 833-858, and 877-921; these read DYEP…SFPR, RGEEEPLVVSQKDQLEHDLEGGDDNEED, RPWN…SDSN, NPTP…PTTI, STATAQPKSRSNSNPPKPTVVISNSNNN, IQPL…SRSL, SSQQSNLVHQPSSSSSSTKQPPTSQF, and FEKS…KPKK. 3 stretches are compositionally biased toward low complexity: residues 310 to 352, 400 to 412, and 429 to 445; these read NNNN…NNNN, SNINGGVNNNNSN, and NINGCVNNNNNNSNNNN. Low complexity-rich tracts occupy residues 539 to 550 and 583 to 638; these read NNNNKNNNNNEK and NPTP…SLSS. The segment covering 643–653 has biased composition (polar residues); the sequence is PQSTYKVPTTI. Low complexity-rich tracts occupy residues 748–775, 842–857, and 892–910; these read TVAATTATTPTTATSTTIKSSPTTPTST, QPSSSSSSTKQPPTSQ, and TSSSLTSNSNSSIPAPSSP.

This sequence belongs to the protein kinase superfamily. TKL Ser/Thr protein kinase family.

The catalysed reaction is L-seryl-[protein] + ATP = O-phospho-L-seryl-[protein] + ADP + H(+). It catalyses the reaction L-threonyl-[protein] + ATP = O-phospho-L-threonyl-[protein] + ADP + H(+). The protein is Probable serine/threonine-protein kinase DDB_G0275165 of Dictyostelium discoideum (Social amoeba).